The primary structure comprises 85 residues: MKTFVLALCLVLIGMVYAKDGYLVSKHTGCKLGCSPKIGDRYCHIECTSMNHKGDEGYCYWLACYCKGMPENAEVYPLPNKSCGK.

Positions 1 to 18 (MKTFVLALCLVLIGMVYA) are cleaved as a signal peptide. Positions 19–84 (KDGYLVSKHT…VYPLPNKSCG (66 aa)) constitute an LCN-type CS-alpha/beta domain. Disulfide bonds link Cys30/Cys83, Cys34/Cys59, Cys43/Cys64, and Cys47/Cys66. At Cys83 the chain carries Cysteine amide.

This sequence belongs to the long (4 C-C) scorpion toxin superfamily. Sodium channel inhibitor family. Beta subfamily. As to expression, expressed by the venom gland.

It localises to the secreted. Its function is as follows. Beta toxins bind voltage-independently at site-4 of sodium channels (Nav) and shift the voltage of activation toward more negative potentials thereby affecting sodium channel activation and promoting spontaneous and repetitive firing. In Centruroides tecomanus (Scorpion), this protein is Beta-toxin Ct6.